The chain runs to 616 residues: UvrABC system protein C (616 aa).

One can recognise a GIY-YIG domain in the interval Glu-12 to Ile-91. The region spanning Ser-202 to Met-237 is the UVR domain.

This sequence belongs to the UvrC family. As to quaternary structure, interacts with UvrB in an incision complex.

The protein localises to the cytoplasm. Its function is as follows. The UvrABC repair system catalyzes the recognition and processing of DNA lesions. UvrC both incises the 5' and 3' sides of the lesion. The N-terminal half is responsible for the 3' incision and the C-terminal half is responsible for the 5' incision. This Gemmatimonas aurantiaca (strain DSM 14586 / JCM 11422 / NBRC 100505 / T-27) protein is UvrABC system protein C.